The following is a 474-amino-acid chain: Protein U79/U80 (474 aa).

Composition is skewed to basic and acidic residues over residues 156 to 165 (DRKKHDDEHR) and 175 to 219 (RKVE…KRQK). Disordered stretches follow at residues 156-219 (DRKK…KRQK) and 412-441 (SGQN…SRTQ). Positions 417 to 432 (GRARGRGRGRAPRRRN) are enriched in basic residues.

Belongs to the herpesviridae U79/UL112 family.

Its subcellular location is the host nucleus. Functionally, may be involved in DNA replication. The polypeptide is Protein U79/U80 (U79/U80) (Homo sapiens (Human)).